A 380-amino-acid chain; its full sequence is Guanine nucleotide-binding protein subunit beta (380 aa).

WD repeat units lie at residues 64–103 (GHSG…KTHA), 106–145 (LHCP…DRDG), 155–195 (GHKG…RISI), 203–243 (GHTA…RAVR), 247–286 (GHEG…QLQV), 296–335 (NELP…VVLN), and 342–380 (SHEG…RKIV).

Belongs to the WD repeat G protein beta family. In terms of assembly, g proteins are composed of 3 units, alpha, beta and gamma. Interacts with the gamma subunits RGG1 and RGG2.

It localises to the cell membrane. Its function is as follows. Guanine nucleotide-binding proteins (G proteins) are involved as modulators or transducers in various transmembrane signaling systems. The beta and gamma chains are required for the GTPase activity, for replacement of GDP by GTP, and for G protein-effector interaction. This is Guanine nucleotide-binding protein subunit beta from Oryza sativa subsp. indica (Rice).